The primary structure comprises 195 residues: Interferon omega-1 (195 aa).

Positions 1–23 (MAFVLSLLMALVLVSYGPGGSLG) are cleaved as a signal peptide. 2 cysteine pairs are disulfide-bonded: Cys24–Cys122 and Cys52–Cys162.

It belongs to the alpha/beta interferon family.

It localises to the secreted. In Bos taurus (Bovine), this protein is Interferon omega-1 (IFNW1).